Reading from the N-terminus, the 240-residue chain is Orotidine 5'-phosphate decarboxylase (240 aa).

Substrate contacts are provided by residues aspartate 10, lysine 32, 59-68, threonine 122, arginine 183, glutamine 192, glycine 212, and arginine 213; that span reads DLKLHDIPNT. Lysine 61 acts as the Proton donor in catalysis.

Belongs to the OMP decarboxylase family. Type 1 subfamily. As to quaternary structure, homodimer.

The catalysed reaction is orotidine 5'-phosphate + H(+) = UMP + CO2. Its pathway is pyrimidine metabolism; UMP biosynthesis via de novo pathway; UMP from orotate: step 2/2. In terms of biological role, catalyzes the decarboxylation of orotidine 5'-monophosphate (OMP) to uridine 5'-monophosphate (UMP). This is Orotidine 5'-phosphate decarboxylase from Carboxydothermus hydrogenoformans (strain ATCC BAA-161 / DSM 6008 / Z-2901).